The sequence spans 372 residues: Putative glutamate--cysteine ligase 2 (372 aa).

The protein belongs to the glutamate--cysteine ligase type 2 family. YbdK subfamily. Homodimer.

The catalysed reaction is L-cysteine + L-glutamate + ATP = gamma-L-glutamyl-L-cysteine + ADP + phosphate + H(+). Its function is as follows. ATP-dependent carboxylate-amine ligase which exhibits weak glutamate--cysteine ligase activity. This is Putative glutamate--cysteine ligase 2 (ybdK) from Escherichia coli O17:K52:H18 (strain UMN026 / ExPEC).